The sequence spans 169 residues: Ureidoglycolate lyase (169 aa).

It belongs to the ureidoglycolate lyase family. As to quaternary structure, homodimer. The cofactor is Ni(2+).

The catalysed reaction is (S)-ureidoglycolate = urea + glyoxylate. The protein operates within nitrogen metabolism; (S)-allantoin degradation. Catalyzes the catabolism of the allantoin degradation intermediate (S)-ureidoglycolate, generating urea and glyoxylate. Involved in the utilization of allantoin as nitrogen source. In Brucella melitensis biotype 2 (strain ATCC 23457), this protein is Ureidoglycolate lyase.